The sequence spans 337 residues: Inositol 2-dehydrogenase (337 aa).

This sequence belongs to the Gfo/Idh/MocA family. In terms of assembly, homotetramer.

It carries out the reaction myo-inositol + NAD(+) = scyllo-inosose + NADH + H(+). Involved in the oxidation of myo-inositol (MI) to 2-keto-myo-inositol (2KMI or 2-inosose). The chain is Inositol 2-dehydrogenase from Pseudarthrobacter chlorophenolicus (strain ATCC 700700 / DSM 12829 / CIP 107037 / JCM 12360 / KCTC 9906 / NCIMB 13794 / A6) (Arthrobacter chlorophenolicus).